The sequence spans 88 residues: DNA-directed RNA polymerase subunit omega (88 aa).

Belongs to the RNA polymerase subunit omega family. The RNAP catalytic core consists of 2 alpha, 1 beta, 1 beta' and 1 omega subunit. When a sigma factor is associated with the core the holoenzyme is formed, which can initiate transcription.

It catalyses the reaction RNA(n) + a ribonucleoside 5'-triphosphate = RNA(n+1) + diphosphate. Promotes RNA polymerase assembly. Latches the N- and C-terminal regions of the beta' subunit thereby facilitating its interaction with the beta and alpha subunits. This Clostridioides difficile (strain 630) (Peptoclostridium difficile) protein is DNA-directed RNA polymerase subunit omega.